The chain runs to 86 residues: Apolipoprotein C-I (86 aa).

Positions 1–26 (MRLFLSLPVLVVVLLMILEGPGPAQG) are cleaved as a signal peptide.

It belongs to the apolipoprotein C1 family.

Its subcellular location is the secreted. In terms of biological role, inhibitor of lipoprotein binding to the low density lipoprotein (LDL) receptor, LDL receptor-related protein, and very low density lipoprotein (VLDL) receptor. Associates with high density lipoproteins (HDL) and the triacylglycerol-rich lipoproteins in the plasma and makes up about 10% of the protein of the VLDL and 2% of that of HDL. Appears to interfere directly with fatty acid uptake and is also the major plasma inhibitor of cholesteryl ester transfer protein (CETP). Binds free fatty acids and reduces their intracellular esterification. Modulates the interaction of APOE with beta-migrating VLDL and inhibits binding of beta-VLDL to the LDL receptor-related protein. In Ateles geoffroyi (Black-handed spider monkey), this protein is Apolipoprotein C-I (APOC1).